The chain runs to 220 residues: MSRPLLQLALDHSSLEAAQRDVTLLKDSVDIVEAGTILCLNEGLGAVKALREQCPDKIIVADWKVADAGETLAQQAFGAGANWMTIICAAPLATVEKGHAMAQRCGGEIQIELFGNWTLDDARDWHRIGVRQAIYHRGRDAQASGQQWGEADLARMKALSDIGLELSITGGITPADLPLFKDIRVKAFIAGRALAGAANPAQVAGDFHAQIDAIWGGARA.

Asp-11 serves as a coordination point for substrate. The Mg(2+) site is built by Glu-33 and Asp-62. Position 192 (Arg-192) interacts with substrate.

The protein belongs to the HPS/KGPDC family. KGPDC subfamily. Homodimer. Mg(2+) serves as cofactor.

It catalyses the reaction 3-dehydro-L-gulonate 6-phosphate + H(+) = L-xylulose 5-phosphate + CO2. Functionally, catalyzes the decarboxylation of 3-keto-L-gulonate-6-P into L-xylulose-5-P. May be involved in the utilization of 2,3-diketo-L-gulonate. This Escherichia coli (strain K12) protein is 3-keto-L-gulonate-6-phosphate decarboxylase SgbH (sgbH).